A 348-amino-acid chain; its full sequence is Fe(3+) ions import ATP-binding protein FbpC (348 aa).

The ABC transporter domain occupies 6–236 (LSLEGATVRF…PADAFVARFL (231 aa)). An ATP-binding site is contributed by 38-45 (GPSGSGKS).

It belongs to the ABC transporter superfamily. Fe(3+) ion importer (TC 3.A.1.10) family. As to quaternary structure, the complex is composed of two ATP-binding proteins (FbpC), two transmembrane proteins (FbpB) and a solute-binding protein (FbpA).

The protein resides in the cell membrane. The enzyme catalyses Fe(3+)(out) + ATP + H2O = Fe(3+)(in) + ADP + phosphate + H(+). In terms of biological role, part of the ABC transporter complex FbpABC involved in Fe(3+) ions import. Responsible for energy coupling to the transport system. The chain is Fe(3+) ions import ATP-binding protein FbpC from Streptomyces coelicolor (strain ATCC BAA-471 / A3(2) / M145).